The following is a 934-amino-acid chain: Bifunctional uridylyltransferase/uridylyl-removing enzyme (934 aa).

Positions M1 to S379 are uridylyltransferase. The tract at residues D380 to T736 is uridylyl-removing. The HD domain occupies V496 to M613. ACT domains follow at residues E737 to A818 and V848 to Q931.

It belongs to the GlnD family. It depends on Mg(2+) as a cofactor.

It carries out the reaction [protein-PII]-L-tyrosine + UTP = [protein-PII]-uridylyl-L-tyrosine + diphosphate. The catalysed reaction is [protein-PII]-uridylyl-L-tyrosine + H2O = [protein-PII]-L-tyrosine + UMP + H(+). Its activity is regulated as follows. Uridylyltransferase (UTase) activity is inhibited by glutamine, while glutamine activates uridylyl-removing (UR) activity. Its function is as follows. Modifies, by uridylylation and deuridylylation, the PII regulatory proteins (GlnB and homologs), in response to the nitrogen status of the cell that GlnD senses through the glutamine level. Under low glutamine levels, catalyzes the conversion of the PII proteins and UTP to PII-UMP and PPi, while under higher glutamine levels, GlnD hydrolyzes PII-UMP to PII and UMP (deuridylylation). Thus, controls uridylylation state and activity of the PII proteins, and plays an important role in the regulation of nitrogen assimilation and metabolism. The protein is Bifunctional uridylyltransferase/uridylyl-removing enzyme of Brucella melitensis biotype 2 (strain ATCC 23457).